A 500-amino-acid polypeptide reads, in one-letter code: ATP synthase subunit alpha, sodium ion specific (500 aa).

169 to 176 contributes to the ATP binding site; the sequence is GDRQTGKT.

This sequence belongs to the ATPase alpha/beta chains family. In terms of assembly, F-type ATPases have 2 components, CF(1) - the catalytic core - and CF(0) - the membrane proton channel. CF(1) has five subunits: alpha(3), beta(3), gamma(1), delta(1), epsilon(1). CF(0) has three main subunits: a, b and c.

Its subcellular location is the cell membrane. The catalysed reaction is 4 Na(+)(in) + ATP + H2O = 4 Na(+)(out) + ADP + phosphate + H(+). Functionally, produces ATP from ADP in the presence of a sodium ion gradient across the membrane. The alpha chain is a regulatory subunit. This Propionigenium modestum protein is ATP synthase subunit alpha, sodium ion specific.